The following is a 502-amino-acid chain: 2-isopropylmalate synthase (502 aa).

Residues aspartate 1, histidine 189, histidine 191, and asparagine 225 each coordinate Mn(2+). The Pyruvate carboxyltransferase domain maps to 1–254 (DGEQALQASL…STNINYKEIY (254 aa)). The tract at residues 379–502 (CLKFFSVQSI…VNKKLQELKK (124 aa)) is regulatory domain.

This sequence belongs to the alpha-IPM synthase/homocitrate synthase family. LeuA type 1 subfamily. In terms of assembly, homodimer. Mn(2+) is required as a cofactor.

It is found in the cytoplasm. The enzyme catalyses 3-methyl-2-oxobutanoate + acetyl-CoA + H2O = (2S)-2-isopropylmalate + CoA + H(+). It functions in the pathway amino-acid biosynthesis; L-leucine biosynthesis; L-leucine from 3-methyl-2-oxobutanoate: step 1/4. Functionally, catalyzes the condensation of the acetyl group of acetyl-CoA with 3-methyl-2-oxobutanoate (2-ketoisovalerate) to form 3-carboxy-3-hydroxy-4-methylpentanoate (2-isopropylmalate). The protein is 2-isopropylmalate synthase of Buchnera aphidicola subsp. Macrosiphoniella ludovicianae.